Consider the following 177-residue polypeptide: MSRVAKAPVAIPAGVEVKLNGQEITIKGAKGELTRVFHNGVVIAQEDNQLTFGPREGVANAWAQAGTARALVKNMVVGVTEGFTKKLVLKGVGYRAAMKGNAVGLTLGFSHPVEHELPAGVKAECPSQTEIVLTGCDKQVVGQVAADIRSYRAPEPYKGKGIRYADENVRSKEAKKK.

The protein belongs to the universal ribosomal protein uL6 family. In terms of assembly, part of the 50S ribosomal subunit.

In terms of biological role, this protein binds to the 23S rRNA, and is important in its secondary structure. It is located near the subunit interface in the base of the L7/L12 stalk, and near the tRNA binding site of the peptidyltransferase center. This Vibrio cholerae serotype O1 (strain ATCC 39315 / El Tor Inaba N16961) protein is Large ribosomal subunit protein uL6.